The primary structure comprises 169 residues: Ribosome maturation factor RimM (169 aa).

The region spanning aspartate 94 to leucine 168 is the PRC barrel domain.

Belongs to the RimM family. Binds ribosomal protein uS19.

The protein resides in the cytoplasm. In terms of biological role, an accessory protein needed during the final step in the assembly of 30S ribosomal subunit, possibly for assembly of the head region. Essential for efficient processing of 16S rRNA. May be needed both before and after RbfA during the maturation of 16S rRNA. It has affinity for free ribosomal 30S subunits but not for 70S ribosomes. This is Ribosome maturation factor RimM from Cereibacter sphaeroides (strain ATCC 17029 / ATH 2.4.9) (Rhodobacter sphaeroides).